A 130-amino-acid polypeptide reads, in one-letter code: Small ribosomal subunit protein uS8 (130 aa).

Belongs to the universal ribosomal protein uS8 family. As to quaternary structure, part of the 30S ribosomal subunit. Contacts proteins S5 and S12.

Its function is as follows. One of the primary rRNA binding proteins, it binds directly to 16S rRNA central domain where it helps coordinate assembly of the platform of the 30S subunit. In Aliivibrio salmonicida (strain LFI1238) (Vibrio salmonicida (strain LFI1238)), this protein is Small ribosomal subunit protein uS8.